The primary structure comprises 561 residues: DNA ligase B (561 aa).

The active-site N6-AMP-lysine intermediate is lysine 125.

It belongs to the NAD-dependent DNA ligase family. LigB subfamily.

The enzyme catalyses NAD(+) + (deoxyribonucleotide)n-3'-hydroxyl + 5'-phospho-(deoxyribonucleotide)m = (deoxyribonucleotide)n+m + AMP + beta-nicotinamide D-nucleotide.. Its function is as follows. Catalyzes the formation of phosphodiester linkages between 5'-phosphoryl and 3'-hydroxyl groups in double-stranded DNA using NAD as a coenzyme and as the energy source for the reaction. This chain is DNA ligase B, found in Salmonella choleraesuis (strain SC-B67).